The following is a 515-amino-acid chain: UPF0053 protein BUsg_314 (515 aa).

7 helical membrane-spanning segments follow: residues 14-34 (LTLVVLEVVLGIDNLIFVAIL), 49-69 (IGLGLALIMRLALLSLISWVV), 79-99 (NFFSLSIRDLILLIGGLFLLF), 125-145 (FWAVVIQIVVLDAVFSLDAII), 150-170 (MVNQLLIMMIAVVLATILMLL), 185-205 (VVVLCLSFLLMIGFSLVAEAL), and 207-227 (FYIPKGYLYAAIGFSILIEIF). CBS domains follow at residues 309–368 (MTPR…NIDV) and 372–432 (ASQI…DADE).

Belongs to the UPF0053 family.

The protein resides in the cell membrane. The protein is UPF0053 protein BUsg_314 of Buchnera aphidicola subsp. Schizaphis graminum (strain Sg).